Reading from the N-terminus, the 554-residue chain is Propanediol dehydratase large subunit (554 aa).

The protein belongs to the diol/glycerol dehydratase large subunit family. In terms of assembly, the propanediol dehydratase enzyme is a heterotrimeric complex composed of a large (PduC), a medium (PduD) and a small (PduE) subunit. Adenosylcob(III)alamin serves as cofactor.

The protein localises to the bacterial microcompartment. The catalysed reaction is propane-1,2-diol = propanal + H2O. Its pathway is polyol metabolism; 1,2-propanediol degradation. Inhibited by glycerol. In terms of biological role, part of the PduCDE complex that catalyzes the dehydration of 1,2-propanediol (1,2-PD) to propionaldehyde. Required for S.typhimurium growth on 1,2-PD as the sole carbon and energy source. This subunit is directly targeted to the BMC. Functionally, the 1,2-PD-specific bacterial microcompartment (BMC) concentrates low levels of 1,2-PD catabolic enzymes, concentrates volatile reaction intermediates thus enhancing pathway flux and keeps the level of toxic, mutagenic propionaldehyde low. This is Propanediol dehydratase large subunit from Salmonella typhimurium (strain LT2 / SGSC1412 / ATCC 700720).